The following is a 774-amino-acid chain: RNA exonuclease 5 (774 aa).

A compositionally biased stretch (basic and acidic residues) spans 1 to 19 (MEPEREGTERHPRKVRESR). Positions 1-22 (MEPEREGTERHPRKVRESRQAP) are disordered. The 149-residue stretch at 228-376 (LFGLDCEMCL…EDARTILELA (149 aa)) folds into the Exonuclease domain. RRM domains lie at 505 to 579 (STVY…RPVT) and 600 to 679 (GSIY…RHLH).

This chain is RNA exonuclease 5, found in Homo sapiens (Human).